Consider the following 374-residue polypeptide: Translocating chain-associated membrane protein 1 (374 aa).

Residues methionine 1 to cysteine 29 lie on the Cytoplasmic side of the membrane. The helical transmembrane segment at valine 30–phenylalanine 50 threads the bilayer. The Lumenal segment spans residues valine 51–glycine 76. N-linked (GlcNAc...) asparagine glycosylation occurs at asparagine 56. A helical membrane pass occupies residues isoleucine 77–isoleucine 97. Residues glutamine 98–glutamate 121 are Cytoplasmic-facing. Residues serine 117 to histidine 326 form the TLC domain. The chain crosses the membrane as a helical span at residues serine 122–serine 142. Over glutamate 143–asparagine 159 the chain is Lumenal. The chain crosses the membrane as a helical span at residues leucine 160–phenylalanine 180. Residues proline 181 to aspartate 192 are Cytoplasmic-facing. Residues isoleucine 193–leucine 213 form a helical membrane-spanning segment. Residues asparagine 214–histidine 217 are Lumenal-facing. The chain crosses the membrane as a helical span at residues leucine 218–leucine 238. Residues phenylalanine 239–serine 251 lie on the Cytoplasmic side of the membrane. A helical membrane pass occupies residues leucine 252 to valine 272. Over glycine 273–arginine 297 the chain is Lumenal. The chain crosses the membrane as a helical span at residues isoleucine 298 to phenylalanine 318. At glutamine 319 to serine 374 the chain is on the cytoplasmic side. Positions valine 334–lysine 347 are enriched in basic residues. Residues valine 334–serine 374 form a disordered region. Over residues asparagine 352 to alanine 363 the composition is skewed to polar residues. The residue at position 365 (serine 365) is a Phosphoserine.

It belongs to the TRAM family. In terms of assembly, interacts with SEC61B. May interact with Derlin-1/DERL1. As to quaternary structure, (Microbial infection) Interacts with human cytomegalovirus/HHV-5 proteins US2 and US11. Post-translationally, N-glycosylated.

Its subcellular location is the endoplasmic reticulum membrane. Functionally, involved in the translocation of nascent protein chains into or through the endoplasmic reticulum (ER) membrane by facilitating the proper chain positioning at the SEC61 channel. Regulates the exposure of nascent secretory protein chain to the cytosol during translocation into the ER. May affect the phospholipid bilayer in the vicinity of the lateral gate of the SEC61 channel, thereby facilitating ER protein transport. Intimately associates with transmembrane (TM) domain of nascent membrane proteins during the entire integration process into the ER membrane. Associates with the second TM domain of G-protein-coupled receptor opsin/OPSD nascent chain in the ER membrane, which may facilitate its integration into the membrane. Under conditions of ER stress, participates in the disposal of misfolded ER membrane proteins during the unfolded protein response (UPR), an integrated stress response (ISR) pathway, by selectively retrotranslocating misfolded ER-membrane proteins from the ER into the cytosol where they are ubiquitinated and degraded by the proteasome. (Microbial infection) In case of cytomegalovirus infection, participates in US2- and US11-mediated ER-to-cytosol retrotranslocation and subsequent degradation of major histocompatibility complex (MHC) class I heavy chains, thereby decreasing the immune detection by cytotoxic T-cells. The chain is Translocating chain-associated membrane protein 1 from Homo sapiens (Human).